The primary structure comprises 255 residues: NAD kinase (255 aa).

Residue Asp44 is the Proton acceptor of the active site. Residues 44–45 (DG), His49, 114–115 (NE), Asp144, Ala152, 155–160 (SAYNLS), and Gln216 contribute to the NAD(+) site.

The protein belongs to the NAD kinase family. A divalent metal cation is required as a cofactor.

The protein localises to the cytoplasm. It catalyses the reaction NAD(+) + ATP = ADP + NADP(+) + H(+). Its function is as follows. Involved in the regulation of the intracellular balance of NAD and NADP, and is a key enzyme in the biosynthesis of NADP. Catalyzes specifically the phosphorylation on 2'-hydroxyl of the adenosine moiety of NAD to yield NADP. This Rickettsia prowazekii (strain Madrid E) protein is NAD kinase.